We begin with the raw amino-acid sequence, 249 residues long: Phosphate import ATP-binding protein PstB (249 aa).

The region spanning 5 to 244 (LRIEDLHFWY…PEKDRTEAYV (240 aa)) is the ABC transporter domain. 37-44 (GPSGCGKS) contributes to the ATP binding site.

Belongs to the ABC transporter superfamily. Phosphate importer (TC 3.A.1.7) family. As to quaternary structure, the complex is composed of two ATP-binding proteins (PstB), two transmembrane proteins (PstC and PstA) and a solute-binding protein (PstS).

Its subcellular location is the cell inner membrane. It carries out the reaction phosphate(out) + ATP + H2O = ADP + 2 phosphate(in) + H(+). Its function is as follows. Part of the ABC transporter complex PstSACB involved in phosphate import. Responsible for energy coupling to the transport system. In Salinibacter ruber (strain DSM 13855 / M31), this protein is Phosphate import ATP-binding protein PstB.